The primary structure comprises 337 residues: Cell-surface associated glycoprotein DFI1 (337 aa).

Residues 1–21 (MEKLSINNNNNNRRYQSRRFD) lie on the Cytoplasmic side of the membrane. The helical transmembrane segment at 22–42 (GITIIRIVVLVFIVTVSTYFV) threads the bilayer. The Extracellular portion of the chain corresponds to 43–269 (NSYTCNQPHH…NGGGLSHTNR (227 aa)). Residues N53, N65, N87, and N100 are each glycosylated (N-linked (GlcNAc...) asparagine). Low complexity-rich tracts occupy residues 124 to 220 (SSTF…TSAS) and 241 to 259 (SVISSSPTASNSNNNKNND). 2 disordered regions span residues 124-224 (SSTF…QHVT) and 241-265 (SVISSSPTASNSNNNKNNDNGGGLS). Residues 270–290 (IVVGVVVGVGGSILIGLLAVL) form a helical membrane-spanning segment. A Glycophorin A motif is present at residues 273 to 277 (GVVVG). Residues 291–337 (FYLRKRNNRDYEGGWTFWRKNEKLGSDEFFNGELGVRDRNINQGSNF) lie on the Cytoplasmic side of the membrane. The short motif at 301–314 (YEGGWTFWRKNEKL) is the Calmodulin-binding element.

Belongs to the MID2 like cell wall stress sensor family. Post-translationally, cross-linked to the carbohydrate polymers of the cell wall. In terms of processing, O-glycosylated by MNT1 and MNT2. Also N-glycosylated.

It localises to the cell membrane. It is found in the cell septum. The protein resides in the secreted. Its subcellular location is the cell wall. Its function is as follows. Cell-surface associated glycoprotein that acts as a plasma membrane receptor-type protein which senses the presence of matrix. Binds to calmodulin in response to environmental conditions and initiates a signaling cascade that activates CEK1, thus promoting invasive filamentation. Involved in the maintenance of the cell wall. This is Cell-surface associated glycoprotein DFI1 from Candida albicans (strain SC5314 / ATCC MYA-2876) (Yeast).